A 217-amino-acid chain; its full sequence is MSEPMMWLLVRGVWETLAMTFVSGFFGFVVGLPVGVLLYVTRPGQIIANAKLYRTVSAIVNIFRSIPFIILLVWMIPFTRVIVGTSIGLQAAIVPLTVGAAPFIARMVENALLEIPTGLIEASRAMGATPMQIVRKVLLPEALPGLVNAATITLITLVGYSAMGGAVGAGGLGQIGYQYGYIGYNATVMNTVLVLLVILVYLIQFAGDRIVRAVTRK.

Residues 1–19 lie on the Periplasmic side of the membrane; the sequence is MSEPMMWLLVRGVWETLAM. The ABC transmembrane type-1 domain occupies 13-204; it reads VWETLAMTFV…LLVILVYLIQ (192 aa). Residues 20–40 form a helical membrane-spanning segment; that stretch reads TFVSGFFGFVVGLPVGVLLYV. At 41-57 the chain is on the cytoplasmic side; the sequence is TRPGQIIANAKLYRTVS. The helical transmembrane segment at 58–78 threads the bilayer; it reads AIVNIFRSIPFIILLVWMIPF. Residues 79 to 80 are Periplasmic-facing; sequence TR. Residues 81–101 traverse the membrane as a helical segment; it reads VIVGTSIGLQAAIVPLTVGAA. Over 102–151 the chain is Cytoplasmic; sequence PFIARMVENALLEIPTGLIEASRAMGATPMQIVRKVLLPEALPGLVNAAT. A helical transmembrane segment spans residues 152–172; sequence ITLITLVGYSAMGGAVGAGGL. Residues 173–185 lie on the Periplasmic side of the membrane; it reads GQIGYQYGYIGYN. The helical transmembrane segment at 186 to 206 threads the bilayer; it reads ATVMNTVLVLLVILVYLIQFA. Topologically, residues 207–217 are cytoplasmic; that stretch reads GDRIVRAVTRK.

Belongs to the binding-protein-dependent transport system permease family. CysTW subfamily.

It localises to the cell inner membrane. Functionally, part of the binding-protein-dependent transport system for D-methionine and the toxic methionine analog alpha-methyl-methionine. Probably responsible for the translocation of the substrate across the membrane. This chain is D-methionine transport system permease protein MetI (metI), found in Escherichia coli O157:H7.